The sequence spans 302 residues: MGASLNEIKQRIASTKKTSQITKAMQMVSAAKLTKSEGASKSFQEYSSKIRSVVTHLVAAQLSELRETEQSSLSEGNYHVMLAQRPVKKTGYIVITSDKGLVGGYNSSILKQTMSMIQEDHDSNKEYALIAIGGTGADFFKARGIDVSYELRGLTDQPTFEEVRKIVTTATTMYQNEVFDELYVCYNHHVNSLTSQFRVEKMLPITDLDPSEATSYEQEYLLEPSPEAILDQLLPQYAESLIYGAIIDAKTAEHAAGMTAMKTATDNAQNIISDLTISYNRARQGAITQEITEIVAGAAALE.

This sequence belongs to the ATPase gamma chain family. As to quaternary structure, F-type ATPases have 2 components, CF(1) - the catalytic core - and CF(0) - the membrane proton channel. CF(1) has five subunits: alpha(3), beta(3), gamma(1), delta(1), epsilon(1). CF(0) has three main subunits: a, b and c.

It localises to the cell membrane. Produces ATP from ADP in the presence of a proton gradient across the membrane. The gamma chain is believed to be important in regulating ATPase activity and the flow of protons through the CF(0) complex. The protein is ATP synthase gamma chain of Enterococcus faecalis (strain ATCC 700802 / V583).